The following is a 143-amino-acid chain: uncharacterized protein (143 aa).

Residues M1 to D21 form a disordered region.

This is an uncharacterized protein from Homo sapiens (Human).